We begin with the raw amino-acid sequence, 200 residues long: Glycerol-3-phosphate acyltransferase (200 aa).

Transmembrane regions (helical) follow at residues 8–28 (ALAL…GMVL), 57–77 (LAAA…VLAA), 88–108 (IAGL…FAGG), 114–134 (FLGI…LAWL), and 159–179 (FLLG…LIFW).

Belongs to the PlsY family. Probably interacts with PlsX.

It is found in the cell inner membrane. The catalysed reaction is an acyl phosphate + sn-glycerol 3-phosphate = a 1-acyl-sn-glycero-3-phosphate + phosphate. It functions in the pathway lipid metabolism; phospholipid metabolism. Functionally, catalyzes the transfer of an acyl group from acyl-phosphate (acyl-PO(4)) to glycerol-3-phosphate (G3P) to form lysophosphatidic acid (LPA). This enzyme utilizes acyl-phosphate as fatty acyl donor, but not acyl-CoA or acyl-ACP. This is Glycerol-3-phosphate acyltransferase from Roseobacter denitrificans (strain ATCC 33942 / OCh 114) (Erythrobacter sp. (strain OCh 114)).